A 182-amino-acid polypeptide reads, in one-letter code: Isopentenyl-diphosphate Delta-isomerase (182 aa).

Residues His-25 and His-32 each contribute to the Mn(2+) site. Positions Leu-30 to Met-164 constitute a Nudix hydrolase domain. The active site involves Cys-67. Position 69 (His-69) interacts with Mn(2+). Glu-87 is a Mg(2+) binding site. Mn(2+) is bound by residues Glu-114 and Glu-116. Glu-116 is a catalytic residue.

The protein belongs to the IPP isomerase type 1 family. As to quaternary structure, homodimer. The cofactor is Mg(2+). Mn(2+) is required as a cofactor.

It localises to the cytoplasm. The enzyme catalyses isopentenyl diphosphate = dimethylallyl diphosphate. The protein operates within isoprenoid biosynthesis; dimethylallyl diphosphate biosynthesis; dimethylallyl diphosphate from isopentenyl diphosphate: step 1/1. Functionally, catalyzes the 1,3-allylic rearrangement of the homoallylic substrate isopentenyl (IPP) to its highly electrophilic allylic isomer, dimethylallyl diphosphate (DMAPP). The sequence is that of Isopentenyl-diphosphate Delta-isomerase from Escherichia coli O9:H4 (strain HS).